The chain runs to 331 residues: MLSPERLALPDYEYLAQRHVLTYMEDAVCQLLENREDISQYGIARFFTEYFNSVCQGTHILFREFSFVQATPHNRVSFLRAFWRCFRTVGKNGDLLTMKEYHCLLQLLCPDFPLELTQKAARIVLMDDAMDCLMSFSDFLFAFQIQFYYSEFLDSVAAIYEDLLSGKNPNTVIVPTSSSGQHRQRPALGGAGTLEGVEASLFYQCLENLCDRHKYSCPPPALVKEALSNVQRLTFYGFLMALSKHRGINQALGALPDKGDLMHDPAMDEELERLLAQVPGLVNSVTASPEASCLPSRTPPRVGSPWRPLHHSRKVDGESDGSTEETDESET.

Residues 1–111 (MLSPERLALP…HCLLQLLCPD (111 aa)) form a required for interaction with PCM1 region. The tract at residues 1–225 (MLSPERLALP…SCPPPALVKE (225 aa)) is required for interaction with TPGS1, LRRC49, and TTLL1. The required for interaction with TPGS2 stretch occupies residues 112 to 331 (FPLELTQKAA…STEETDESET (220 aa)). A disordered region spans residues 288–331 (SPEASCLPSRTPPRVGSPWRPLHHSRKVDGESDGSTEETDESET). The span at 318–331 (ESDGSTEETDESET) shows a compositional bias: acidic residues. At Ser-319 the chain carries Phosphoserine.

Belongs to the CSTPP1 family. In terms of assembly, interacts with PCM1. Interacts with TTLL1, TPGS1, TPGS2 and LRRC49; the interactions link CSTPP1 to the complex TPGC. Binds to alpha-tubulin.

Its subcellular location is the cytoplasm. It localises to the cytoskeleton. It is found in the microtubule organizing center. The protein localises to the centrosome. The protein resides in the centriolar satellite. Regulator of the tubulin polyglutamylase complex (TPGC) that controls cytoskeletal organization, nuclear shape, and cilium disassembly by balancing microtubule and actin assembly. Regulates the assembly and stability of the TPGC and thereby modulates polyglutamylation of the microtubule, which antagonizes MAP4 binding. The polypeptide is Centriolar satellite-associated tubulin polyglutamylase complex regulator 1 (Homo sapiens (Human)).